A 195-amino-acid chain; its full sequence is PE-PGRS family protein PE_PGRS61 (195 aa).

The protein belongs to the mycobacterial PE family. PGRS subfamily. As to quaternary structure, interacts with human TLR2.

The protein localises to the secreted. It localises to the cell wall. It is found in the cell surface. Binding of Ca(2+) to PE_PGRS61 induces conformational changes and increases affinity for TLR2. In terms of biological role, mediates Ca(2+)-dependent up-regulation of the anti-inflammatory cytokine IL-10. The sequence is that of PE-PGRS family protein PE_PGRS61 from Mycobacterium tuberculosis (strain ATCC 25618 / H37Rv).